A 281-amino-acid chain; its full sequence is 4-diphosphocytidyl-2-C-methyl-D-erythritol kinase (281 aa).

Lys-15 is a catalytic residue. Pro-98–Ser-108 provides a ligand contact to ATP. The active site involves Asp-140.

This sequence belongs to the GHMP kinase family. IspE subfamily.

The enzyme catalyses 4-CDP-2-C-methyl-D-erythritol + ATP = 4-CDP-2-C-methyl-D-erythritol 2-phosphate + ADP + H(+). The protein operates within isoprenoid biosynthesis; isopentenyl diphosphate biosynthesis via DXP pathway; isopentenyl diphosphate from 1-deoxy-D-xylulose 5-phosphate: step 3/6. Its function is as follows. Catalyzes the phosphorylation of the position 2 hydroxy group of 4-diphosphocytidyl-2C-methyl-D-erythritol. The polypeptide is 4-diphosphocytidyl-2-C-methyl-D-erythritol kinase (Neisseria gonorrhoeae (strain NCCP11945)).